The sequence spans 100 residues: Urease subunit gamma (100 aa).

This sequence belongs to the urease gamma subunit family. As to quaternary structure, heterotrimer of UreA (gamma), UreB (beta) and UreC (alpha) subunits. Three heterotrimers associate to form the active enzyme.

The protein resides in the cytoplasm. The catalysed reaction is urea + 2 H2O + H(+) = hydrogencarbonate + 2 NH4(+). The protein operates within nitrogen metabolism; urea degradation; CO(2) and NH(3) from urea (urease route): step 1/1. The sequence is that of Urease subunit gamma from Rhizobium leguminosarum bv. viciae.